We begin with the raw amino-acid sequence, 1015 residues long: Fibronectin-binding protein A (1015 aa).

The first 36 residues, 1 to 36 (MKNNLRYGIRKHKLGAASVFLGTMIVVGMGQDKEAA), serve as a signal peptide directing secretion. The YSIRK-G/S signaling motif motif lies at 7–18 (YGIRKHKLGAAS). The interval 37–512 (ASEQKTTTVE…SNKADGNGKN (476 aa)) is ligand-binding A region. A compositionally biased stretch (polar residues) spans 75–92 (SYSATATEQPSNATQVTT). The interval 75-199 (SYSATATEQP…KVETGTDVTS (125 aa)) is disordered. Basic and acidic residues predominate over residues 112-126 (TVKEEVVKEEAKPQV). A compositionally biased stretch (polar residues) spans 129 to 139 (TTQSQDNSGDQ). Positions 179–193 (DVVEAKEASDEKVET) are enriched in basic and acidic residues. The interval 194-512 (GTDVTSKVTV…SNKADGNGKN (319 aa)) is fibrinogen/elastin/tropoelastin-binding. Positions 513–873 (GQIIQNNDFE…EGQQTIEEDT (361 aa)) are fibronectin-binding. The B-1 repeat unit spans residues 546–575 (ENQDNTPLDIDYHTAIDGEGGYVDGYIETI). The interval 546 to 605 (ENQDNTPLDIDYHTAIDGEGGYVDGYIETIEETDSSAIDIDYHTAVDSEAGHVGGYTESS) is 2 X approximate tandem repeats. The B-2 repeat unit spans residues 576 to 605 (EETDSSAIDIDYHTAVDSEAGHVGGYTESS). Disordered stretches follow at residues 596–623 (GHVG…NSKH), 741–815 (LGYE…IDFD), 828–953 (EIIE…GKVV), and 966–992 (VAPT…NKGM). A D-1 repeat occupies 746 to 783 (GQNSGNQSFEEDTEEDKPKYEQGGNIVDIDFDSVPQIQ). Positions 746-875 (GQNSGNQSFE…QQTIEEDTTP (130 aa)) are 4 X approximate tandem repeats. Residues 780–791 (PQIQGQNNGNQS) are compositionally biased toward polar residues. A D-2 repeat occupies 784–821 (GQNNGNQSFEEDTEKDKPKYEQGGNIIDIDFDSVPQIH). One copy of the D-3 repeat lies at 822–860 (GFNKHTEIIEEDTNKDKPNYQFGGHNSVDFEEDTLPKVS). Residues 828–839 (EIIEEDTNKDKP) are compositionally biased toward basic and acidic residues. One copy of the D-4; truncated repeat lies at 861–875 (GQNEGQQTIEEDTTP). Residues 875-935 (PPTPPTPEVP…PAEPGKPVPP (61 aa)) are compositionally biased toward pro residues. 5 WR repeats span residues 876-889 (PTPP…EPET), 890-903 (PTPP…EPET), 904-917 (PTPP…EPET), 918-931 (PTPP…EPGK), and 932-945 (PVPP…KPSK). A 5 X tandem repeats, Pro-rich (WR) region spans residues 876 to 945 (PTPPTPEVPS…AKEEPKKPSK (70 aa)). An LPXTG sorting signal motif is present at residues 979–983 (LPETG). Position 982 is a pentaglycyl murein peptidoglycan amidated threonine (threonine 982). Positions 983 to 1015 (GGEESTNKGMLFGGLFSILGLALLRRNKKNNKA) are cleaved as a propeptide — removed by sortase.

The protein localises to the secreted. It is found in the cell wall. Its function is as follows. Promotes bacterial attachment to multiple substrates, such as fibronectin (Fn), fibrinogen (Fg), elastin peptides and tropoelastin. This confers to S.aureus the ability to invade endothelial cells. Promotes adherence to and aggregation of activated platelets. The protein is Fibronectin-binding protein A (fnbA) of Staphylococcus aureus (strain MSSA476).